Consider the following 280-residue polypeptide: Chlorophyll a-b binding protein CP26, chloroplastic (280 aa).

A chloroplast-targeting transit peptide spans 1–48; that stretch reads MASLGVSEMLGTPLNFRAVSRSSAPLASSPSTFKTVALFSKKKPAPAK. Phenylalanine 70 serves as a coordination point for chlorophyll b. The chlorophyll a site is built by tyrosine 95, glutamate 114, and histidine 117. 2 helical membrane-spanning segments follow: residues 110–130 and 167–187; these read YQAF…GFII and IPIN…GAEY. Residues arginine 119, isoleucine 167, glutamate 186, and arginine 189 each coordinate chlorophyll b. Positions 224, 225, 228, 230, 242, and 257 each coordinate chlorophyll a. Residues 231–251 form a helical membrane-spanning segment; the sequence is LAMFAMLGFFIQAYVTGEGPV.

This sequence belongs to the light-harvesting chlorophyll a/b-binding (LHC) protein family. As to quaternary structure, forms heterotrimers with LHCB3. The LHC complex consists of chlorophyll a-b binding proteins. Binds at least 14 chlorophylls (8 Chl-a and 6 Chl-b) and carotenoids such as lutein and neoxanthin. is required as a cofactor. Post-translationally, photoregulated by reversible phosphorylation of its threonine residues.

The protein localises to the plastid. It localises to the chloroplast thylakoid membrane. The light-harvesting complex (LHC) functions as a light receptor, it captures and delivers excitation energy to photosystems with which it is closely associated. The polypeptide is Chlorophyll a-b binding protein CP26, chloroplastic (LHCB5) (Arabidopsis thaliana (Mouse-ear cress)).